We begin with the raw amino-acid sequence, 293 residues long: Ribosomal RNA small subunit methyltransferase A (293 aa).

S-adenosyl-L-methionine-binding residues include Asn33, Val35, Gly60, Glu81, Asp111, and Asn130.

This sequence belongs to the class I-like SAM-binding methyltransferase superfamily. rRNA adenine N(6)-methyltransferase family. RsmA subfamily.

The protein localises to the cytoplasm. The catalysed reaction is adenosine(1518)/adenosine(1519) in 16S rRNA + 4 S-adenosyl-L-methionine = N(6)-dimethyladenosine(1518)/N(6)-dimethyladenosine(1519) in 16S rRNA + 4 S-adenosyl-L-homocysteine + 4 H(+). Functionally, specifically dimethylates two adjacent adenosines (A1518 and A1519) in the loop of a conserved hairpin near the 3'-end of 16S rRNA in the 30S particle. May play a critical role in biogenesis of 30S subunits. The protein is Ribosomal RNA small subunit methyltransferase A of Corynebacterium glutamicum (strain ATCC 13032 / DSM 20300 / JCM 1318 / BCRC 11384 / CCUG 27702 / LMG 3730 / NBRC 12168 / NCIMB 10025 / NRRL B-2784 / 534).